Consider the following 293-residue polypeptide: Acetylglutamate kinase (293 aa).

Substrate is bound by residues 65-66 (GG), arginine 87, and asparagine 188.

It belongs to the acetylglutamate kinase family. ArgB subfamily.

The protein resides in the cytoplasm. It carries out the reaction N-acetyl-L-glutamate + ATP = N-acetyl-L-glutamyl 5-phosphate + ADP. Its pathway is amino-acid biosynthesis; L-arginine biosynthesis; N(2)-acetyl-L-ornithine from L-glutamate: step 2/4. In terms of biological role, catalyzes the ATP-dependent phosphorylation of N-acetyl-L-glutamate. The polypeptide is Acetylglutamate kinase (Symbiobacterium thermophilum (strain DSM 24528 / JCM 14929 / IAM 14863 / T)).